Consider the following 659-residue polypeptide: UvrABC system protein B (659 aa).

In terms of domain architecture, Helicase ATP-binding spans 25-414 (EGVRRGAREQ…PSLVVEQIVR (390 aa)). ATP is bound at residue 38-45 (GATGTGKT). The Beta-hairpin motif lies at 91 to 114 (YYDYYQPEAYIPTTDTYIEKDALI). The region spanning 431–597 (QIDDLYAEIR…TIVKPVRDVI (167 aa)) is the Helicase C-terminal domain. Residues 620–655 (PKVVAKLRKEMMQAAKDLDFERAAEIRDIIFELEKK) enclose the UVR domain.

The protein belongs to the UvrB family. Forms a heterotetramer with UvrA during the search for lesions. Interacts with UvrC in an incision complex.

The protein localises to the cytoplasm. The UvrABC repair system catalyzes the recognition and processing of DNA lesions. A damage recognition complex composed of 2 UvrA and 2 UvrB subunits scans DNA for abnormalities. Upon binding of the UvrA(2)B(2) complex to a putative damaged site, the DNA wraps around one UvrB monomer. DNA wrap is dependent on ATP binding by UvrB and probably causes local melting of the DNA helix, facilitating insertion of UvrB beta-hairpin between the DNA strands. Then UvrB probes one DNA strand for the presence of a lesion. If a lesion is found the UvrA subunits dissociate and the UvrB-DNA preincision complex is formed. This complex is subsequently bound by UvrC and the second UvrB is released. If no lesion is found, the DNA wraps around the other UvrB subunit that will check the other stand for damage. This is UvrABC system protein B from Symbiobacterium thermophilum (strain DSM 24528 / JCM 14929 / IAM 14863 / T).